Consider the following 429-residue polypeptide: MTKPMTMSQKILAYHAGKEYVEPGDLIFANVDLVLGNDVTTPVAIKEFEKIGIDRVFDKDKIAIVPDHFTPNKDIKSAQQCKMVREFAKKYEITNYFEVGEMGIEHALLPEKGLVVPGDLVIGADSHTCTYGALGAFSTGIGSTDMACAMATGKCWFKVPEAIKFILYGKKTGWTSGKDIILHIIGMIGVDGALYKSMEYTGEGLKSLSMDDRFTIANMAIEAGAKNGIFEVDEKTIEYVKQHSTKPYKIFKADEDAEYSQVFEIDISKIRPTVAFPHLPENTKTIDEITEKIYIDQVVIGSCTNGRIEDLRIAAKILKGRKVKKGLRCIIFPATQNIYKQALKEGFIEIFIDAGCVVSTPTCGPCLGGHMGILADGEKALATTNRNFVGRMGHPNSEVYLSSPAIAAASAVLGYIGSPEELGMKGDEE.

Residues C303, C363, and C366 each coordinate [4Fe-4S] cluster.

This sequence belongs to the aconitase/IPM isomerase family. LeuC type 2 subfamily. In terms of assembly, heterodimer of LeuC and LeuD. [4Fe-4S] cluster serves as cofactor.

The enzyme catalyses (2R,3S)-3-isopropylmalate = (2S)-2-isopropylmalate. Its pathway is amino-acid biosynthesis; L-leucine biosynthesis; L-leucine from 3-methyl-2-oxobutanoate: step 2/4. Functionally, catalyzes the isomerization between 2-isopropylmalate and 3-isopropylmalate, via the formation of 2-isopropylmaleate. This chain is 3-isopropylmalate dehydratase large subunit, found in Caldicellulosiruptor bescii (strain ATCC BAA-1888 / DSM 6725 / KCTC 15123 / Z-1320) (Anaerocellum thermophilum).